The primary structure comprises 430 residues: tRNA(Ile)-lysidine synthase (430 aa).

21–26 contributes to the ATP binding site; the sequence is SGGLDS.

The protein belongs to the tRNA(Ile)-lysidine synthase family.

The protein localises to the cytoplasm. It catalyses the reaction cytidine(34) in tRNA(Ile2) + L-lysine + ATP = lysidine(34) in tRNA(Ile2) + AMP + diphosphate + H(+). Functionally, ligates lysine onto the cytidine present at position 34 of the AUA codon-specific tRNA(Ile) that contains the anticodon CAU, in an ATP-dependent manner. Cytidine is converted to lysidine, thus changing the amino acid specificity of the tRNA from methionine to isoleucine. The chain is tRNA(Ile)-lysidine synthase from Salmonella agona (strain SL483).